A 142-amino-acid chain; its full sequence is Hemoglobin subunit alpha-A (142 aa).

The Globin domain occupies 2–142 (VLSANDKTNV…VGNVLTAKYR (141 aa)). An O2-binding site is contributed by histidine 59. Histidine 88 is a heme b binding site.

This sequence belongs to the globin family. Heterotetramer of two alpha chains and two beta chains. As to expression, red blood cells.

Its function is as follows. Involved in oxygen transport from the lung to the various peripheral tissues. This is Hemoglobin subunit alpha-A (HBAA) from Accipiter gentilis (Northern goshawk).